A 398-amino-acid polypeptide reads, in one-letter code: Alpha-ketoglutarate-dependent dioxygenase bsc9 (398 aa).

Residues histidine 167 and aspartate 169 each contribute to the Fe cation site. Threonine 212 contributes to the 2-oxoglutarate binding site. Position 365 (histidine 365) interacts with Fe cation. Residue arginine 377 coordinates 2-oxoglutarate.

The protein belongs to the TfdA dioxygenase family. Fe(2+) is required as a cofactor.

It participates in mycotoxin biosynthesis. In terms of biological role, alpha-ketoglutarate dependent dioxygenase; part of the gene cluster that mediates the biosynthesis of the diterpene glucoside brassicicene C. In the first step of the brassicicene C biosynthesis, the bifunctional diterpene synthase bsc8 that possesses both prenyl transferase and terpene cyclase activity, converts isopentenyl diphosphate and dimethylallyl diphosphate into geranylgeranyl diphosphate (GGDP) that is further converted into fusicocca-2,10(14)-diene, the first precursor for brassicicene C. Fusicocca-2,10(14)-diene is then substrate of cytochrome P450 monooxygenase bsc1 for hydroxylation at the C-8 position. Oxidation at C-16 position to aldehyde is then catalyzed by the cytochrome P450 monooyxygenase bsc7, yielding fusicocca-2,10(14)-diene-8-beta,16-diol. Follows the isomerization of the double bond and reduction of aldehyde to alcohol catalyzed by the short-chain dehydrogenase/reductase bsc3 to yield the diol compound fusicocca-1,10(14)-diene-8 beta,16-diol. The next step is the oxidation at the C-3 position of fusicocca-2,10(14)-diene-8-beta,16-diol catalyzed by the alpha-ketoglutarate dependent dioxygenase bsc9, to produce a triol compound. Methylation of the hydroxy group at position 16 is performed by the methyltransferase bsc6. 16-O-methylation is followed by oxidation at the C-13 position to ketone and an alkyl shift of the methyl group leads to brassicicene C. Although the probable acetyltransferase bsc4 is included in the gene cluster, no acetylation reactions are necessary for brassicicene C biosynthesis. However, the fact that brassicicene E, which is a structurally related compound having an acetoxy group at position 12, was previously isolated from another strain of A.brassicicola suggests that the ATCC 96836 strain might also produce a small amount of brassicicene E. This is Alpha-ketoglutarate-dependent dioxygenase bsc9 from Alternaria brassicicola (Dark leaf spot agent).